Here is a 253-residue protein sequence, read N- to C-terminus: Ribonuclease HII (253 aa).

In terms of domain architecture, RNase H type-2 spans Pro-70–Leu-253. Positions 76, 77, and 168 each coordinate a divalent metal cation.

It belongs to the RNase HII family. Requires Mn(2+) as cofactor. It depends on Mg(2+) as a cofactor.

It is found in the cytoplasm. It catalyses the reaction Endonucleolytic cleavage to 5'-phosphomonoester.. Its function is as follows. Endonuclease that specifically degrades the RNA of RNA-DNA hybrids. This Latilactobacillus sakei subsp. sakei (strain 23K) (Lactobacillus sakei subsp. sakei) protein is Ribonuclease HII.